Reading from the N-terminus, the 613-residue chain is 4-hydroxy-3-methylbut-2-en-1-yl diphosphate synthase (flavodoxin) (613 aa).

Residues Cys-514, Cys-517, Cys-548, and Glu-555 each contribute to the [4Fe-4S] cluster site.

It belongs to the IspG family. [4Fe-4S] cluster serves as cofactor.

The catalysed reaction is (2E)-4-hydroxy-3-methylbut-2-enyl diphosphate + oxidized [flavodoxin] + H2O + 2 H(+) = 2-C-methyl-D-erythritol 2,4-cyclic diphosphate + reduced [flavodoxin]. It functions in the pathway isoprenoid biosynthesis; isopentenyl diphosphate biosynthesis via DXP pathway; isopentenyl diphosphate from 1-deoxy-D-xylulose 5-phosphate: step 5/6. In terms of biological role, converts 2C-methyl-D-erythritol 2,4-cyclodiphosphate (ME-2,4cPP) into 1-hydroxy-2-methyl-2-(E)-butenyl 4-diphosphate. The polypeptide is 4-hydroxy-3-methylbut-2-en-1-yl diphosphate synthase (flavodoxin) (Chlamydia pneumoniae (Chlamydophila pneumoniae)).